The sequence spans 420 residues: Probable pectate lyase C (420 aa).

Residues 1 to 20 form the signal peptide; that stretch reads MKLSAPLLVSLAAFSQAVTA. 3 N-linked (GlcNAc...) asparagine glycosylation sites follow: Asn49, Asn165, and Asn202. Arg205 is an active-site residue. Residues 262–297 form the EF-hand domain; it reads NANFHGYVQNNYYDPDKDGQLDGFELGVSSSNYGGV. Ca(2+)-binding residues include Asp275, Asp277, Asp279, Gln281, and Glu286. The segment at 358–396 is disordered; that stretch reads TMGGPGTLNGGTPAKDTDGDGIPDEAEKQLGTDPNTNDS. Asn394 carries an N-linked (GlcNAc...) asparagine glycan.

The protein belongs to the polysaccharide lyase 1 family. Ca(2+) is required as a cofactor.

The protein localises to the secreted. The catalysed reaction is Eliminative cleavage of (1-&gt;4)-alpha-D-galacturonan to give oligosaccharides with 4-deoxy-alpha-D-galact-4-enuronosyl groups at their non-reducing ends.. Pectinolytic enzyme consist of four classes of enzymes: pectin lyase, polygalacturonase, pectin methylesterase and rhamnogalacturonase. Among pectinolytic enzymes, pectin lyase is the most important in depolymerization of pectin, since it cleaves internal glycosidic bonds of highly methylated pectins. Favors pectate, the anion, over pectin, the methyl ester. In Aspergillus fumigatus (strain CBS 144.89 / FGSC A1163 / CEA10) (Neosartorya fumigata), this protein is Probable pectate lyase C (plyC).